Consider the following 1068-residue polypeptide: Putative protein TIC 214 N-terminal part (1068 aa).

6 consecutive transmembrane segments (helical) span residues Val11–Ile31, Ile68–Ile88, Leu92–Ile112, Ile131–Leu151, Phe166–Leu186, and Phe213–Ile233.

Belongs to the TIC214 family. As to quaternary structure, part of the Tic complex.

The protein resides in the plastid. Its subcellular location is the chloroplast inner membrane. In terms of biological role, involved in protein precursor import into chloroplasts. May be part of an intermediate translocation complex acting as a protein-conducting channel at the inner envelope. The protein is Putative protein TIC 214 N-terminal part of Marchantia polymorpha (Common liverwort).